The following is a 106-amino-acid chain: P4 prophage-derived uncharacterized protein t2655 (106 aa).

This chain is P4 prophage-derived uncharacterized protein t2655, found in Salmonella typhi.